Reading from the N-terminus, the 295-residue chain is Aspartate carbamoyltransferase catalytic subunit (295 aa).

The carbamoyl phosphate site is built by Arg49 and Thr50. L-aspartate is bound at residue Lys77. Residues Arg99, His127, and Gln130 each contribute to the carbamoyl phosphate site. L-aspartate contacts are provided by Arg161 and Arg212. Carbamoyl phosphate-binding residues include Gly251 and Pro252.

The protein belongs to the aspartate/ornithine carbamoyltransferase superfamily. ATCase family. In terms of assembly, heterododecamer (2C3:3R2) of six catalytic PyrB chains organized as two trimers (C3), and six regulatory PyrI chains organized as three dimers (R2).

It carries out the reaction carbamoyl phosphate + L-aspartate = N-carbamoyl-L-aspartate + phosphate + H(+). The protein operates within pyrimidine metabolism; UMP biosynthesis via de novo pathway; (S)-dihydroorotate from bicarbonate: step 2/3. Its function is as follows. Catalyzes the condensation of carbamoyl phosphate and aspartate to form carbamoyl aspartate and inorganic phosphate, the committed step in the de novo pyrimidine nucleotide biosynthesis pathway. The polypeptide is Aspartate carbamoyltransferase catalytic subunit (Campylobacter jejuni subsp. jejuni serotype O:6 (strain 81116 / NCTC 11828)).